Reading from the N-terminus, the 259-residue chain is Sphinganine C4-monooxygenase 2 (259 aa).

3 helical membrane passes run 10 to 30 (FLGT…YICL), 54 to 74 (AVVK…VILF), and 91 to 111 (ILLL…WQYF). The Fatty acid hydroxylase domain occupies 98-234 (FIIAMLVIDT…FVMWDRILGT (137 aa)). The Histidine box-1 signature appears at 113–117 (HRYMH). Residues 127–131 (HSQHH) carry the Histidine box-2 motif. The Histidine box-3 signature appears at 206-212 (YHDVHHQ).

Belongs to the sterol desaturase family. Requires Fe cation as cofactor. As to expression, ubiquitous, with higher levels in flowers and roots.

It localises to the endoplasmic reticulum membrane. It catalyses the reaction a dihydroceramide + 2 Fe(II)-[cytochrome b5] + O2 + 2 H(+) = a phytoceramide + 2 Fe(III)-[cytochrome b5] + H2O. The protein operates within membrane lipid metabolism; sphingolipid biosynthesis. Its function is as follows. Involved in sphingolipid trihydroxy long-chain base (4-hydroxysphinganine) biosynthesis. Can use C18- and C20-sphinganine as substrates to produce C18- and C20-phytosphinganines (D-ribo-2-amino-1,3,4-trihydroxyoctadecane and -eicosane). The chain is Sphinganine C4-monooxygenase 2 (SBH2) from Arabidopsis thaliana (Mouse-ear cress).